We begin with the raw amino-acid sequence, 134 residues long: Small ribosomal subunit protein uS11 (134 aa).

The interval 115–134 (VTPIPTDSTRRKGGRRGRRL) is disordered. Positions 125–134 (RKGGRRGRRL) are enriched in basic residues.

Belongs to the universal ribosomal protein uS11 family.

In Syntrichia ruralis (Great hairy screw-moss), this protein is Small ribosomal subunit protein uS11 (RPS14).